The chain runs to 331 residues: Cathepsin S (331 aa).

An N-terminal signal peptide occupies residues 1-16 (MKRLVCVLLVCSSAVA). Residues 17-114 (QLHKDPTLDH…ITYKSNPNRI (98 aa)) constitute a propeptide, activation peptide. N-linked (GlcNAc...) asparagine glycosylation occurs at asparagine 104. Intrachain disulfides connect cysteine 126–cysteine 224, cysteine 136–cysteine 180, cysteine 170–cysteine 213, and cysteine 272–cysteine 320. Cysteine 139 is a catalytic residue. Residues histidine 278 and asparagine 298 contribute to the active site.

It belongs to the peptidase C1 family. Monomer.

Its subcellular location is the lysosome. It is found in the secreted. It localises to the cytoplasmic vesicle. The protein localises to the phagosome. It carries out the reaction Similar to cathepsin L, but with much less activity on Z-Phe-Arg-|-NHMec, and more activity on the Z-Val-Val-Arg-|-Xaa compound.. Thiol protease. Key protease responsible for the removal of the invariant chain from MHC class II molecules and MHC class II antigen presentation. The bond-specificity of this proteinase is in part similar to the specificities of cathepsin L. This chain is Cathepsin S (CTSS), found in Homo sapiens (Human).